A 189-amino-acid polypeptide reads, in one-letter code: GTP cyclohydrolase 1 (189 aa).

Zn(2+)-binding residues include cysteine 76, histidine 79, and cysteine 149.

It belongs to the GTP cyclohydrolase I family. As to quaternary structure, toroid-shaped homodecamer, composed of two pentamers of five dimers.

The catalysed reaction is GTP + H2O = 7,8-dihydroneopterin 3'-triphosphate + formate + H(+). The protein operates within cofactor biosynthesis; 7,8-dihydroneopterin triphosphate biosynthesis; 7,8-dihydroneopterin triphosphate from GTP: step 1/1. This chain is GTP cyclohydrolase 1, found in Dehalococcoides mccartyi (strain ATCC BAA-2266 / KCTC 15142 / 195) (Dehalococcoides ethenogenes (strain 195)).